Consider the following 217-residue polypeptide: Octanoyltransferase (217 aa).

In terms of domain architecture, BPL/LPL catalytic spans 32–207; that stretch reads SDSPDELWIV…TLSQLLGYQQ (176 aa). Substrate-binding positions include 71 to 78, 138 to 140, and 151 to 153; these read RGGQVTYH, SLG, and GLA. Cysteine 169 (acyl-thioester intermediate) is an active-site residue.

The protein belongs to the LipB family.

It localises to the cytoplasm. It catalyses the reaction octanoyl-[ACP] + L-lysyl-[protein] = N(6)-octanoyl-L-lysyl-[protein] + holo-[ACP] + H(+). It participates in protein modification; protein lipoylation via endogenous pathway; protein N(6)-(lipoyl)lysine from octanoyl-[acyl-carrier-protein]: step 1/2. Functionally, catalyzes the transfer of endogenously produced octanoic acid from octanoyl-acyl-carrier-protein onto the lipoyl domains of lipoate-dependent enzymes. Lipoyl-ACP can also act as a substrate although octanoyl-ACP is likely to be the physiological substrate. In Shewanella sp. (strain ANA-3), this protein is Octanoyltransferase.